A 421-amino-acid polypeptide reads, in one-letter code: UDP-glucuronic acid decarboxylase 1 (421 aa).

Residues 1–19 (MVRTRIQRLLTGINRRMMK) lie on the Cytoplasmic side of the membrane. Residues 20–40 (LLIALALIAYVASVWGNFVNM) traverse the membrane as a helical segment. Residues 41–421 (SKSIQENGEQ…RVKKGRTRHN (381 aa)) lie on the Lumenal side of the membrane. Residues Gly-99, Phe-100, Val-101, Asp-120, Asn-121, Phe-123, Thr-124, Gly-125, Asp-145, and Val-146 each coordinate NAD(+). UDP-alpha-D-glucuronate contacts are provided by Leu-150 and Tyr-151. Positions 160 and 162 each coordinate NAD(+). Lys-178 contributes to the UDP-alpha-D-glucuronate binding site. Thr-179 contributes to the NAD(+) binding site. Residues Asn-186, Gly-189, Lys-192, and Arg-193 each coordinate UDP-alpha-D-glucuronate. Positions 201, 232, and 236 each coordinate NAD(+). Tyr-232 acts as the Proton acceptor in catalysis. Residues Tyr-246, Gln-249, and Glu-250 each coordinate UDP-alpha-D-glucuronate. Residues Thr-262, His-268, and Arg-273 each contribute to the NAD(+) site. N-linked (GlcNAc...) asparagine glycosylation is found at Asn-317 and Asn-386. The segment at 400 to 421 (ANNQYIPKPKPARVKKGRTRHN) is disordered. Over residues 409 to 421 (KPARVKKGRTRHN) the composition is skewed to basic residues.

Belongs to the NAD(P)-dependent epimerase/dehydratase family. UDP-glucuronic acid decarboxylase subfamily. Homodimer and homotetramer. NAD(+) is required as a cofactor.

The protein resides in the golgi apparatus. The protein localises to the golgi stack membrane. The enzyme catalyses UDP-alpha-D-glucuronate + H(+) = UDP-alpha-D-xylose + CO2. The protein operates within nucleotide-sugar biosynthesis; UDP-alpha-D-xylose biosynthesis; UDP-alpha-D-xylose from UDP-alpha-D-glucuronate: step 1/1. Functionally, catalyzes the NAD-dependent decarboxylation of UDP-glucuronic acid to UDP-xylose. Necessary for the biosynthesis of the core tetrasaccharide in glycosaminoglycan biosynthesis. In Xenopus tropicalis (Western clawed frog), this protein is UDP-glucuronic acid decarboxylase 1 (uxs1).